The chain runs to 557 residues: Dihydroxy-acid dehydratase (557 aa).

A [2Fe-2S] cluster-binding site is contributed by cysteine 50. A Mg(2+)-binding site is contributed by aspartate 82. A [2Fe-2S] cluster-binding site is contributed by cysteine 123. Residues aspartate 124 and lysine 125 each contribute to the Mg(2+) site. An N6-carboxylysine modification is found at lysine 125. Cysteine 195 contacts [2Fe-2S] cluster. Glutamate 447 lines the Mg(2+) pocket. Serine 473 (proton acceptor) is an active-site residue.

The protein belongs to the IlvD/Edd family. Homodimer. [2Fe-2S] cluster is required as a cofactor. Mg(2+) serves as cofactor.

It catalyses the reaction (2R)-2,3-dihydroxy-3-methylbutanoate = 3-methyl-2-oxobutanoate + H2O. It carries out the reaction (2R,3R)-2,3-dihydroxy-3-methylpentanoate = (S)-3-methyl-2-oxopentanoate + H2O. It participates in amino-acid biosynthesis; L-isoleucine biosynthesis; L-isoleucine from 2-oxobutanoate: step 3/4. It functions in the pathway amino-acid biosynthesis; L-valine biosynthesis; L-valine from pyruvate: step 3/4. In terms of biological role, functions in the biosynthesis of branched-chain amino acids. Catalyzes the dehydration of (2R,3R)-2,3-dihydroxy-3-methylpentanoate (2,3-dihydroxy-3-methylvalerate) into 2-oxo-3-methylpentanoate (2-oxo-3-methylvalerate) and of (2R)-2,3-dihydroxy-3-methylbutanoate (2,3-dihydroxyisovalerate) into 2-oxo-3-methylbutanoate (2-oxoisovalerate), the penultimate precursor to L-isoleucine and L-valine, respectively. This chain is Dihydroxy-acid dehydratase, found in Metallosphaera sedula (strain ATCC 51363 / DSM 5348 / JCM 9185 / NBRC 15509 / TH2).